We begin with the raw amino-acid sequence, 150 residues long: Aspartate 1-decarboxylase (150 aa).

The active-site Schiff-base intermediate with substrate; via pyruvic acid is Ser-24. A Pyruvic acid (Ser) modification is found at Ser-24. Residue Thr-56 coordinates substrate. Tyr-57 acts as the Proton donor in catalysis. 72–74 (GAA) is a substrate binding site.

This sequence belongs to the PanD family. Heterooctamer of four alpha and four beta subunits. The cofactor is pyruvate. In terms of processing, is synthesized initially as an inactive proenzyme, which is activated by self-cleavage at a specific serine bond to produce a beta-subunit with a hydroxyl group at its C-terminus and an alpha-subunit with a pyruvoyl group at its N-terminus.

It is found in the cytoplasm. The catalysed reaction is L-aspartate + H(+) = beta-alanine + CO2. The protein operates within cofactor biosynthesis; (R)-pantothenate biosynthesis; beta-alanine from L-aspartate: step 1/1. In terms of biological role, catalyzes the pyruvoyl-dependent decarboxylation of aspartate to produce beta-alanine. The polypeptide is Aspartate 1-decarboxylase (Beijerinckia indica subsp. indica (strain ATCC 9039 / DSM 1715 / NCIMB 8712)).